The primary structure comprises 243 residues: Nuclear protein UL4 homolog (243 aa).

A disordered region spans residues 193–226 (RPDDQTTPTPTPHQYTSQRRQPETNCPSPQPAFF). The span at 205 to 219 (HQYTSQRRQPETNCP) shows a compositional bias: polar residues.

Belongs to the alphaherpesvirinae HHV-1 UL4 family.

The protein localises to the host nucleus. The sequence is that of Nuclear protein UL4 homolog from Varicella-zoster virus (strain Oka vaccine) (HHV-3).